The following is a 204-amino-acid chain: Casparian strip membrane protein 3 (204 aa).

At 1–41 the chain is on the cytoplasmic side; the sequence is MKNESTFIDVPADSSSAMKGKAPLIGVAKDHTASGSGGYNR. Residues 42–62 form a helical membrane-spanning segment; the sequence is GLSIFDFLLRLAAIVAASVAA. At 63 to 92 the chain is on the extracellular side; it reads GTMFTSDETLPFFTQFLQFQAGYDDLPTFQ. Residues 93–113 form a helical membrane-spanning segment; the sequence is FFVISMSLVSGYIVLSLPISV. Over 114–125 the chain is Cytoplasmic; sequence VTIVRPLAAAPR. Residues 126 to 146 form a helical membrane-spanning segment; it reads LLLLVLDTAVMGLTMAAASSA. Residues 147 to 204 are Extracellular-facing; it reads AAISYVAHNGNQNTNWLPICQQFGDFCQKTSGGCGLFLCRRRVFHDPGCPLRSRSQRH.

It belongs to the Casparian strip membrane proteins (CASP) family. In terms of assembly, homodimer and heterodimers.

It is found in the cell membrane. Regulates membrane-cell wall junctions and localized cell wall deposition. Required for establishment of the Casparian strip membrane domain (CSD) and the subsequent formation of Casparian strips, a cell wall modification of the root endodermis that determines an apoplastic barrier between the intraorganismal apoplasm and the extraorganismal apoplasm and prevents lateral diffusion. In Raphanus sativus (Radish), this protein is Casparian strip membrane protein 3.